The following is a 174-amino-acid chain: UPF0398 protein LACR_0544 (174 aa).

The protein belongs to the UPF0398 family.

This Lactococcus lactis subsp. cremoris (strain SK11) protein is UPF0398 protein LACR_0544.